Reading from the N-terminus, the 335-residue chain is Urokinase plasminogen activator surface receptor (335 aa).

The first 22 residues, 1-22, serve as a signal peptide directing secretion; it reads MGHPLLLPLLLLLHTCVPASWG. 3 UPAR/Ly6 domains span residues 23–114, 115–213, and 214–305; these read LRCM…RSRY, LECI…PQNG, and HQCY…YRKG. 3 cysteine pairs are disulfide-bonded: Cys25–Cys46, Cys28–Cys34, and Cys39–Cys67. An N-linked (GlcNAc...) asparagine glycan is attached at Asn74. Intrachain disulfides connect Cys93–Cys98, Cys117–Cys144, Cys120–Cys127, Cys137–Cys169, Cys175–Cys192, Cys193–Cys198, Cys216–Cys244, Cys219–Cys227, Cys237–Cys263, Cys269–Cys287, and Cys288–Cys293. N-linked (GlcNAc...) asparagine glycosylation is found at Asn184, Asn194, Asn222, and Asn255. Residue Gly305 is the site of GPI-anchor amidated glycine attachment. The propeptide at 306-335 is removed in mature form; the sequence is AAPQPGPAHLSLTITLLMTARLWGGTLLWT.

Monomer. Interacts (via the UPAR/Ly6 domains) with SRPX2. Interacts with MRC2. Interacts with FAP (seprase); the interaction occurs at the cell surface of invadopodia membrane. Interacts with SORL1 (via N-terminal ectodomain); this interaction decreases PLAUR internalization. The ternary complex composed of PLAUR-PLAU-SERPINE1 also interacts with SORL1.

Its subcellular location is the cell membrane. The protein resides in the cell projection. The protein localises to the invadopodium membrane. Its function is as follows. Acts as a receptor for urokinase plasminogen activator. Plays a role in localizing and promoting plasmin formation. Mediates the proteolysis-independent signal transduction activation effects of U-PA. It is subject to negative-feedback regulation by U-PA which cleaves it into an inactive form. The chain is Urokinase plasminogen activator surface receptor (PLAUR) from Chlorocebus aethiops (Green monkey).